The chain runs to 842 residues: MutS protein homolog him-14 (842 aa).

A disordered region spans residues 1–21 (MYSNKSFQRRQRQQVAESRSE). Position 588–595 (588–595 (GPNMAGKS)) interacts with ATP.

The protein belongs to the DNA mismatch repair MutS family. In terms of assembly, heterooligomer of him-14 and msh-5.

The protein localises to the nucleus. Its function is as follows. Required during the pachytene stage of meiotic prophase for the formation of crossovers between homologous chromosomes. Together with msh-5 and zhp-3 plays a role in the activation of DNA damage-dependent apoptosis at the DNA damage checkpoint in pachytene cells. Not needed for pairing or synapsis. May promote crossing over by interfering with Holliday junction branch migration. Has no apparent role in DNA mismatch repair. In Caenorhabditis elegans, this protein is MutS protein homolog him-14.